A 335-amino-acid chain; its full sequence is Glycerol-3-phosphate dehydrogenase [NAD(P)+] (335 aa).

Residues serine 15, tyrosine 16, histidine 36, and lysine 110 each coordinate NADPH. Residues lysine 110, glycine 139, and threonine 141 each contribute to the sn-glycerol 3-phosphate site. Position 143 (alanine 143) interacts with NADPH. Lysine 195, aspartate 248, serine 258, arginine 259, and asparagine 260 together coordinate sn-glycerol 3-phosphate. Lysine 195 (proton acceptor) is an active-site residue. Residue arginine 259 coordinates NADPH. Positions 283 and 285 each coordinate NADPH.

This sequence belongs to the NAD-dependent glycerol-3-phosphate dehydrogenase family.

Its subcellular location is the cytoplasm. It carries out the reaction sn-glycerol 3-phosphate + NAD(+) = dihydroxyacetone phosphate + NADH + H(+). The enzyme catalyses sn-glycerol 3-phosphate + NADP(+) = dihydroxyacetone phosphate + NADPH + H(+). The protein operates within membrane lipid metabolism; glycerophospholipid metabolism. Its function is as follows. Catalyzes the reduction of the glycolytic intermediate dihydroxyacetone phosphate (DHAP) to sn-glycerol 3-phosphate (G3P), the key precursor for phospholipid synthesis. The chain is Glycerol-3-phosphate dehydrogenase [NAD(P)+] from Haemophilus influenzae (strain 86-028NP).